The following is a 597-amino-acid chain: Peptidyl-prolyl cis-trans isomerase-like 2 (597 aa).

The U-box domain maps to 41–114 (KKLPFNFCAA…TTDSDENKGD (74 aa)). Residues 328–483 (NKGYVRMETN…NKIVIKDMII (156 aa)) form the PPIase cyclophilin-type domain. Residues 495–519 (KKQKEGEEERKREVARQGGTEDDRT) are compositionally biased toward basic and acidic residues. Disordered regions lie at residues 495-521 (KKQKEGEEERKREVARQGGTEDDRTTW) and 560-597 (ATTTTTTTRKAEEEEVDTWEEPVRKKAKMGGFGNFDGW).

This sequence belongs to the cyclophilin-type PPIase family. PPIL2 subfamily.

It is found in the nucleus. It carries out the reaction [protein]-peptidylproline (omega=180) = [protein]-peptidylproline (omega=0). The catalysed reaction is S-ubiquitinyl-[E2 ubiquitin-conjugating enzyme]-L-cysteine + [acceptor protein]-L-lysine = [E2 ubiquitin-conjugating enzyme]-L-cysteine + N(6)-ubiquitinyl-[acceptor protein]-L-lysine.. It participates in protein modification; protein ubiquitination. Functionally, may catalyze the cis-trans isomerization of proline imidic peptide bonds in oligopeptides thereby assisting the folding of proteins. May also function as a chaperone, playing a role in intracellular transport of proteins. May also have a protein ubiquitin ligase activity acting as an E3 ubiquitin protein ligase or as a ubiquitin-ubiquitin ligase promoting elongation of ubiquitin chains on proteins. The protein is Peptidyl-prolyl cis-trans isomerase-like 2 (ppi-2) of Neurospora crassa (strain ATCC 24698 / 74-OR23-1A / CBS 708.71 / DSM 1257 / FGSC 987).